The chain runs to 690 residues: Protein arginine N-methyltransferase 7 (690 aa).

2 consecutive SAM-dependent MTase PRMT-type domains span residues 14-357 and 366-690; these read QNSW…YSLW and TKSV…QKKL.

Belongs to the class I-like SAM-binding methyltransferase superfamily. Protein arginine N-methyltransferase family. PRMT7 subfamily.

In terms of biological role, essential arginine methyltransferase that can both catalyze the formation of omega-N monomethylarginine (MMA) and symmetrical dimethylarginine (sDMA). Specifically mediates the symmetrical dimethylation of arginine residues in the small nuclear ribonucleoproteins SmD1 and SmD3. The protein is Protein arginine N-methyltransferase 7 (Art7) of Drosophila sechellia (Fruit fly).